The following is a 535-amino-acid chain: CTP synthase (535 aa).

An amidoligase domain region spans residues 1-267; sequence MTKYIFVTGG…DSLVCSHLKL (267 aa). CTP is bound at residue Ser-13. Ser-13 serves as a coordination point for UTP. 14–19 is a binding site for ATP; the sequence is SLGKGI. An L-glutamine-binding site is contributed by Tyr-54. Asp-71 contacts ATP. Asp-71 and Glu-141 together coordinate Mg(2+). Residues 148–150, 188–193, and Lys-224 contribute to the CTP site; these read DIE and KTKPTQ. UTP is bound by residues 188–193 and Lys-224; that span reads KTKPTQ. Residues 292-534 enclose the Glutamine amidotransferase type-1 domain; sequence TIALVGKYVE…VHASLKTSEK (243 aa). Residue Gly-354 participates in L-glutamine binding. Catalysis depends on Cys-381, which acts as the Nucleophile; for glutamine hydrolysis. L-glutamine contacts are provided by residues 382 to 385, Glu-405, and Arg-462; that span reads LGMQ. Residues His-507 and Glu-509 contribute to the active site.

This sequence belongs to the CTP synthase family. As to quaternary structure, homotetramer.

It carries out the reaction UTP + L-glutamine + ATP + H2O = CTP + L-glutamate + ADP + phosphate + 2 H(+). The enzyme catalyses L-glutamine + H2O = L-glutamate + NH4(+). It catalyses the reaction UTP + NH4(+) + ATP = CTP + ADP + phosphate + 2 H(+). It functions in the pathway pyrimidine metabolism; CTP biosynthesis via de novo pathway; CTP from UDP: step 2/2. Allosterically activated by GTP, when glutamine is the substrate; GTP has no effect on the reaction when ammonia is the substrate. The allosteric effector GTP functions by stabilizing the protein conformation that binds the tetrahedral intermediate(s) formed during glutamine hydrolysis. Inhibited by the product CTP, via allosteric rather than competitive inhibition. Functionally, catalyzes the ATP-dependent amination of UTP to CTP with either L-glutamine or ammonia as the source of nitrogen. Regulates intracellular CTP levels through interactions with the four ribonucleotide triphosphates. This chain is CTP synthase, found in Bacillus licheniformis (strain ATCC 14580 / DSM 13 / JCM 2505 / CCUG 7422 / NBRC 12200 / NCIMB 9375 / NCTC 10341 / NRRL NRS-1264 / Gibson 46).